Consider the following 151-residue polypeptide: Ribosome maturation factor RimP (151 aa).

The protein belongs to the RimP family.

The protein localises to the cytoplasm. Its function is as follows. Required for maturation of 30S ribosomal subunits. The sequence is that of Ribosome maturation factor RimP from Thermoanaerobacter sp. (strain X514).